Here is a 2056-residue protein sequence, read N- to C-terminus: E3 ubiquitin-protein ligase TRIP12 (2056 aa).

Polar residues-rich tracts occupy residues 1 to 10 (MSSRPNNNPG) and 18 to 27 (RNTAGAQPQE). Residues 1–440 (MSSRPNNNPG…SGESESDDSE (440 aa)) are disordered. The span at 39 to 51 (AENKTHSLPESRK) shows a compositional bias: basic and acidic residues. Polar residues-rich tracts occupy residues 58-67 (KVQSNTTSGP) and 153-168 (SQEQ…STSK). Composition is skewed to low complexity over residues 213–226 (LSKL…SAKA) and 234–253 (SSSS…VSAA). 2 stretches are compositionally biased toward polar residues: residues 317-327 (PGSSKTETSKP) and 363-375 (QKTT…TSRR). The segment covering 383 to 395 (AAAEARRQEKMAD) has biased composition (basic and acidic residues). Positions 415–433 (GAAASSSVAGAVGMTTSGE) are enriched in low complexity. Positions 791-905 (MLKKGNAQNT…DPELAKSFIK (115 aa)) constitute a WWE domain. The segment covering 1027–1042 (TTISTGSGTASGNSAA) has biased composition (low complexity). Disordered stretches follow at residues 1027-1147 (TTIS…ASKD), 1465-1500 (EEEE…DELW), and 1632-1651 (TNPE…PRLD). Residues 1069-1082 (KRKRLPKRGPRRPK) show a composition bias toward basic residues. Positions 1085–1094 (PPRDEDKVDN) are enriched in basic and acidic residues. 2 stretches are compositionally biased toward polar residues: residues 1095-1106 (QAKSPTTTQSPK) and 1119-1129 (RLSTQSNSNNI). Residues 1560 to 1634 (EIIPTSEFNN…AMQRLLDTNP (75 aa)) form a K-box region. Residues 1949–2056 (PDHGYTHDSR…REGQQSFHLS (108 aa)) form the HECT domain. Cys2023 (glycyl thioester intermediate) is an active-site residue.

Belongs to the UPL family. K-HECT subfamily.

It localises to the nucleus. Its subcellular location is the nucleoplasm. It carries out the reaction S-ubiquitinyl-[E2 ubiquitin-conjugating enzyme]-L-cysteine + [acceptor protein]-L-lysine = [E2 ubiquitin-conjugating enzyme]-L-cysteine + N(6)-ubiquitinyl-[acceptor protein]-L-lysine.. The protein operates within protein modification; protein ubiquitination. Functionally, E3 ubiquitin-protein ligase involved in ubiquitin fusion degradation (UFD) pathway and regulation of DNA repair. Part of the ubiquitin fusion degradation (UFD) pathway, a process that mediates ubiquitination of protein at their N-terminus, regardless of the presence of lysine residues in target proteins. Acts as a key regulator of DNA damage response by acting as a suppressor of RNF168, an E3 ubiquitin-protein ligase that promotes accumulation of 'Lys-63'-linked histone H2A and H2AX at DNA damage sites, thereby acting as a guard against excessive spreading of ubiquitinated chromatin at damaged chromosomes. In Xenopus tropicalis (Western clawed frog), this protein is E3 ubiquitin-protein ligase TRIP12 (trip12).